Reading from the N-terminus, the 99-residue chain is MAATQEEIIAGLAEIIEEVTGIEPSEVTPEKSFVDDLDIDSLSMVEIAVQTEDKYGVKIPDEDLAGLRTVGDVVAYIQKLEEENPEAAAALREKFAADQ.

One can recognise a Carrier domain in the interval 3 to 81; it reads ATQEEIIAGL…DVVAYIQKLE (79 aa). Residue Ser41 is modified to O-(pantetheine 4'-phosphoryl)serine. Residue Lys79 forms an Isoglutamyl lysine isopeptide (Lys-Gln) (interchain with Q-Cter in protein Pup) linkage.

Belongs to the acyl carrier protein (ACP) family. Post-translationally, 4'-phosphopantetheine is transferred from CoA to a specific serine of apo-AcpM.

It localises to the cytoplasm. Functionally, acyl carrier protein involved in meromycolate extension. The chain is Meromycolate extension acyl carrier protein (acpM) from Mycolicibacterium smegmatis (strain ATCC 700084 / mc(2)155) (Mycobacterium smegmatis).